The sequence spans 651 residues: Protein cueball (651 aa).

Positions 1–21 are cleaved as a signal peptide; it reads MILRLFILLSIITVYLQLSVG. Residues 22–540 lie on the Extracellular side of the membrane; that stretch reads IQQQFEFAIT…VCLAPNAWTG (519 aa). Residues asparagine 77, asparagine 102, and asparagine 114 are each glycosylated (N-linked (GlcNAc...) asparagine). LDL-receptor class B repeat units follow at residues 115-162, 163-207, and 208-253; these read RTIY…DICG, RKLY…DQGA, and KRIF…TRNA. The N-linked (GlcNAc...) asparagine glycan is linked to asparagine 183. Residues 290–311 are disordered; sequence VEGEEGTGAMDDNDIWPVGDFE. Asparagine 324 is a glycosylation site (N-linked (GlcNAc...) asparagine). 3 consecutive EGF-like domains span residues 374-408, 409-440, and 443-480; these read QLDE…TRCE, TNEC…YSGE, and EVKK…LRCE. 7 disulfide bridges follow: cysteine 383–cysteine 396, cysteine 398–cysteine 407, cysteine 412–cysteine 421, cysteine 416–cysteine 431, cysteine 447–cysteine 457, cysteine 451–cysteine 468, and cysteine 470–cysteine 479. 2 N-linked (GlcNAc...) asparagine glycosylation sites follow: asparagine 482 and asparagine 499. A helical transmembrane segment spans residues 541-561; it reads SVLMPLMISLILILLLLTIFI. Topologically, residues 562–651 are cytoplasmic; that stretch reads HGLRRLYKPK…LIHNMEDDLY (90 aa).

The protein belongs to the cueball family.

It localises to the cell membrane. Its function is as follows. Has a role in spermatogenesis and oogenesis. This Drosophila willistoni (Fruit fly) protein is Protein cueball.